A 101-amino-acid chain; its full sequence is Small ribosomal subunit protein bS18c (101 aa).

The protein belongs to the bacterial ribosomal protein bS18 family. Part of the 30S ribosomal subunit.

It is found in the plastid. The protein resides in the chloroplast. This Carica papaya (Papaya) protein is Small ribosomal subunit protein bS18c.